A 61-amino-acid chain; its full sequence is Temporin-SN4 (61 aa).

Residues 1 to 22 form the signal peptide; sequence MFTLKKTLLLLFFLGTINLSLC. Residues 23 to 44 constitute a propeptide, removed in mature form; sequence EEERNAEEERRDGDDEMDVEVK. K61 is subject to Lysine amide.

It belongs to the frog skin active peptide (FSAP) family. Temporin subfamily. As to expression, expressed by the skin glands.

The protein resides in the secreted. Its function is as follows. Antimicrobial peptide. Active against some Gram-positive and Gram-negative bacterial strains. Active against fungus C.glabrata 090902 but not against C.albicans ATCC 12231. Shows weak hemolytic activity against human erythrocytes. The chain is Temporin-SN4 from Sylvirana spinulosa (Fine-spined frog).